A 1426-amino-acid polypeptide reads, in one-letter code: MSQLCLWLTCQPCYAVSVRGILTGAIFILGCWGLSDFQKSLLQDLEPKDVSSYFGHHAAPFTGHPPSHLQRLRRRRTLEDILHLELLVAVGPDVSRAHQEDTERYVLTNLNIGSELLRNPSLGVQFQVHLVKLITLSDSESTPNITANITSSLMSVCEWSQTINPHDDRDPSHADLILYITRFDLELPDGNQQVRGVTQLGGACSLSWSCLITEDTGFDLGVTIAHEIGHSFGLDHDGAPGSGSTCKASGHVMAADGATPTGGTLEWSACSQRQLQHLLSTGQMHCFQDPPGLQSGLTRHQLMAQPGLYYSADDQCRVAFGSGAVACTFSREGLDVCQALSCHTDPLDQSSCSRLLVPLLDGTECGVEKWCSKARCRSLAELAPVAAVHGHWSSWGPHSPCSRSCGGGVITRRRWCNNPRPAFGGRACVGEDLQAKMCNTQACEKTQLEFMSEQCAQTDRQPLQLSQGTASFYHWDAAVQYSQGDTLCRHMCWAVGESFIVSRGDRFLDGTRCVPSGPQDDGTLSLCLLGSCRTFGCDGRMDSQKVWDACQVCGGDNSTCSSRNGSFTAGRAREYVTFLIVTPNMTNAHIVNRRPLFTHLAVRIQGHYIVAGKTSISPNTTYPSLLEDYRVEYRVTLTEDQLPHLEEIHIRGPVRDDIEIQVYRRYGGEYGDLTHPDITFSYFQLKQQAAWVWTAKRGPCSVSCGAGLRWVTYSCQDQAQDKWVKNAQCQGSPQPPAWQEPCVSAPCSPYWVAGDFSPCSVSCGGGLRERSLRCVETQDGFLKTLPPARCRAVAQQPAAEVENCNSQPCPTRWEVSDPGPCMSSACEAGLDSRNVTCVSRAGDPEKPETAGPCRTDEMSAMLEPCSRSLCSPGLGQVDNTMSLGEEAPSPVGSDKPGAQAEHVWTPLVGLCSISCGRGLKELYFLCMDSVLKMPVQEELCGLASKPPSRWEVCRARPCPARWETQVLAPCPVTCGGGRVPLSVRCVQLDRGHPISVPHSKCSPVPKPGSFEDCSPEPCPARWKVLSLGPCSASCGLGTATQMVACMQLDQGHDNEVNETFCKALVRPQASVPCLIADCAFRWHISAWTECSVSCGDGIQRRHDTCLGPQAQVPVPANFCQHLPKPMTVRGCWAGPCAGQETSSSLPHKEATLPSQTQAAATVASLQWSQPRARTPTLFSASQSLGLQENLEEHGACGRQYLEPTGTIHMRDQGRLDCVVAIGRPLGEVVTLQILESSLKCSAGEQLLLWGRFTWRKTCRKMPGMTFSTKTNTVVVKQHRVLPGGGVLLRYWSQPAPGTFYKECDRQLFGPRGEIVSPSLSPDGRKAGTCRVFISVAPQARIAIRALASDMGTASEGTNANYVSIRDIHSLRTTTFWGQQVLYWESEGSEAELEFSPGFLEAHASLQGEYWTISPRTSEQDDSLALS.

The first 33 residues, 1 to 33 (MSQLCLWLTCQPCYAVSVRGILTGAIFILGCWG), serve as a signal peptide directing secretion. Residues 34-76 (LSDFQKSLLQDLEPKDVSSYFGHHAAPFTGHPPSHLQRLRRRR) constitute a propeptide that is removed on maturation. One can recognise a Peptidase M12B domain in the interval 74 to 291 (RRRTLEDILH…GQMHCFQDPP (218 aa)). Position 85 (glutamate 85) interacts with Ca(2+). 2 N-linked (GlcNAc...) asparagine glycosylation sites follow: asparagine 144 and asparagine 148. Disulfide bonds link cysteine 157–cysteine 210, cysteine 204–cysteine 286, and cysteine 246–cysteine 270. Residues aspartate 175, aspartate 184, glutamate 186, aspartate 189, and glutamate 214 each contribute to the Ca(2+) site. Histidine 226 contacts Zn(2+). Glutamate 227 is a catalytic residue. Residues histidine 230 and histidine 236 each contribute to the Zn(2+) site. Ca(2+)-binding residues include threonine 281 and aspartate 289. Residues 295-388 (SGLTRHQLMA…LAELAPVAAV (94 aa)) enclose the Disintegrin domain. 11 cysteine pairs are disulfide-bonded: cysteine 316–cysteine 342, cysteine 327–cysteine 352, cysteine 337–cysteine 371, cysteine 365–cysteine 376, cysteine 401–cysteine 438, cysteine 405–cysteine 443, cysteine 416–cysteine 428, cysteine 488–cysteine 527, cysteine 513–cysteine 532, cysteine 537–cysteine 553, and cysteine 550–cysteine 560. The 56-residue stretch at 389–444 (HGHWSSWGPHSPCSRSCGGGVITRRRWCNNPRPAFGGRACVGEDLQAKMCNTQACE) folds into the TSP type-1 1 domain. The cysteine-rich stretch occupies residues 445–561 (KTQLEFMSEQ…VCGGDNSTCS (117 aa)). The Cell attachment site motif lies at 503–505 (RGD). The segment at 556–685 (DNSTCSSRNG…PDITFSYFQL (130 aa)) is spacer. Asparagine 557, asparagine 564, asparagine 584, and asparagine 619 each carry an N-linked (GlcNAc...) asparagine glycan. 7 consecutive TSP type-1 domains span residues 687–746 (QQAA…VSAP), 747–810 (CSPY…QPCP), 808–871 (PCPT…SLCS), 904–957 (WTPL…RARP), 958–1019 (CPAR…EPCP), 1020–1078 (ARWK…IADC), and 1079–1137 (AFRW…GPCA). 2 O-linked (Fuc...) serine glycosylation sites follow: serine 703 and serine 762. A glycan (N-linked (GlcNAc...) asparagine) is linked at asparagine 834. Serine 914 carries an O-linked (Fuc...) serine glycan. A glycan (O-linked (Fuc...) threonine) is linked at threonine 973. Serine 1033 is a glycosylation site (O-linked (Fuc...) serine). The N-linked (GlcNAc...) asparagine glycan is linked to asparagine 1057. A glycan (O-linked (Fuc...) serine) is linked at serine 1093. CUB domains follow at residues 1195-1302 (ACGR…FYKE) and 1293-1426 (QPAP…LALS).

Zn(2+) is required as a cofactor. Ca(2+) serves as cofactor. The precursor is processed by a furin endopeptidase which cleaves off the pro-domain. In terms of processing, O-glycosylated. O-fucosylated by POFUT2 on a serine or a threonine residue found within the consensus sequence C1-X(2)-(S/T)-C2-G of the TSP type-1 repeat domains where C1 and C2 are the first and second cysteine residue of the repeat, respectively. Fucosylated repeats can then be further glycosylated by the addition of a beta-1,3-glucose residue by the glucosyltransferase, B3GALTL. Fucosylation mediates the efficient secretion of ADAMTS13. May also be C-glycosylated on tryptophan residues within the consensus sequence W-X-X-W of the TPRs, and also N-glycosylated. These other glycosylations can also facilitate secretion. Plasma. Expression is consistently high in liver, medium in lung and spleen, low in skeletal muscle and undetectable in heart, brain, kidney and testis.

It is found in the secreted. The catalysed reaction is The enzyme cleaves the von Willebrand factor at bond 842-Tyr-|-Met-843 within the A2 domain.. With respect to regulation, zinc and calcium ions cooperatively modulate enzyme activity. The cleavage of the pro-domain is not required for protease activity. Dependence on calcium for proteolytic activity is mediated by the high affinity site. Its function is as follows. Cleaves the vWF multimers in plasma into smaller forms thereby controlling vWF-mediated platelet thrombus formation. The sequence is that of A disintegrin and metalloproteinase with thrombospondin motifs 13 (Adamts13) from Mus musculus (Mouse).